We begin with the raw amino-acid sequence, 448 residues long: Proline-rich protein 4 (448 aa).

An N-terminal signal peptide occupies residues 1–29 (MRILPEPRGSVPCLLLLVSVLLSATLSLA). 46 repeat units span residues 152–156 (PMPKL), 157–161 (PPFKG), 165–169 (PFPLP), 170–174 (PPLEL), 175–179 (PPFLK), 183–187 (PPKYS), 188–193 (PPVEVP), 194–198 (PPVPV), 201–205 (PPPKK), 208–212 (PPPVP), 216–220 (PPPKK), 222–226 (VPPPV), 227–231 (PVYKP), 232–236 (PPKVE), 238–242 (PPPIP), 245–249 (PCPPK), 250–254 (PPKIE), 256–259 (PPPV), 260–264 (PVYKP), 265–270 (PPKIEK), 271–278 (PPPVPVYK), 279–284 (PPPKIE), 286–294 (PPPVPVHKL), 295–299 (PKKPC), 300–304 (PPKKV), 306–311 (PPPVPV), 314–320 (PPTKKPC), 321–327 (PPKKVDP), 328–334 (PPVPVHK), 335–341 (PPPKIVI), 342–348 (PPPKIEH), 349–356 (PPPVPVYK), 357–363 (PPPKIEH), 364–368 (PPIYI), 369–374 (PPIVKK), 378–384 (PPVPIYK), 385–389 (PPVVI), 390–394 (PKKPC), 395–402 (PPPVPVYK), 403–407 (PPVVV), 409–413 (PKKPC), 414–419 (PPLPQL), 420–424 (PPLPK), 425–429 (FPPLP), 430–434 (PKYIH), and 442–446 (PPLPP). A 46 X 5 AA approximate repeats region spans residues 152–446 (PMPKLPPFKG…KFGKWPPLPP (295 aa)). The segment covering 240 to 290 (PIPKKPCPPKPPKIEHPPPVPVYKPPPKIEKPPPVPVYKPPPKIEHPPPVP) has biased composition (pro residues). The segment at 240-345 (PIPKKPCPPK…PPKIVIPPPK (106 aa)) is disordered. Composition is skewed to pro residues over residues 306 to 319 (PPPVPVHKPPTKKP) and 327 to 345 (PPPVPVHKPPPKIVIPPPK).

It belongs to the plant proline-rich protein superfamily. Mostly expressed in aerial organs, particularly in expanding leaves, stems, flowers, and siliques. Also present in stipules.

The protein localises to the secreted. Its subcellular location is the cell wall. This Arabidopsis thaliana (Mouse-ear cress) protein is Proline-rich protein 4 (PRP4).